The sequence spans 192 residues: Thioredoxin-like 3-2, chloroplastic (192 aa).

Residues Met-1–Arg-55 constitute a chloroplast transit peptide. Positions Leu-66–Ile-191 constitute a Thioredoxin domain. Active-site nucleophile residues include Cys-110 and Cys-113. A disulfide bridge connects residues Cys-110 and Cys-113.

It belongs to the thioredoxin family.

It is found in the plastid. The protein resides in the chloroplast stroma. Functionally, probable thiol-disulfide oxidoreductase that may participate in various redox reactions. The protein is Thioredoxin-like 3-2, chloroplastic (WCRKC2) of Arabidopsis thaliana (Mouse-ear cress).